We begin with the raw amino-acid sequence, 729 residues long: MLYKGDTLYLDWLEDGIAELVFDAPGSVNKLDTATVASLGQALEVLEKQHDLKGLLLRSNKAAFIVGADITEFLSLFLVPEEQLSQWLHFANSVFNRLEDLPVPTLAAVNGYALGGGCECVLATDYRLATPDLRIGLPETKLGIMPGFGGSVRLPRMLGADSALEIIAAGKDVGAEHALKIGLVDGVVKQEKLIEGAIAVLRQAITGDLDWRAKRQPKLEPLKLSKIEAAMSFTIAKGMVAQTAGKHYPAPMTAVKTIEAAARFGREEALNLENKSFVPLAHTNEARALVGIFLNDQYVKGKAKKLTKDIETPKQAAVLGAGIMGGGIAYQSAWKGVPVIMKDINDKSLNLGMTEAAKLLNKQLERGKIDGLKLAGVISTIHPTLDYAGFDRVDVVVEAVVENPKVKKAVLAETEQKVRPETVLASNTSTIPIGELASALERPENFCGMHFFNPVHRMPLVEIIRGEKSSDETIAKVVAWASKMGKTPIVVNNCPGFFVNRVLFPYFAGFSQLLRDGADFRKVDKVMEKQFGWPMGPAYLLDVVGIDTAHHAQAVMAAGFPQRMQKEYRDAIDALFDASRFGQKNGLGFWRYKEDSKGKPKKEEDAAVDDLLASVSQTKRDFSDDEIIARMMIPMINEVVRCLEEGIIASPAEADMALVYGLGFPPFHGGAFRWLDTQGSAKYLDMAQQYQHLGPLYEVPEGLRDKTRHNEPYYPPVEPARPVGSLKTA.

An enoyl-CoA hydratase/isomerase region spans residues 1 to 189; the sequence is MLYKGDTLYL…KIGLVDGVVK (189 aa). Asp296 contributes to the substrate binding site. A 3-hydroxyacyl-CoA dehydrogenase region spans residues 311–729; sequence ETPKQAAVLG…ARPVGSLKTA (419 aa). NAD(+) contacts are provided by residues Met324, Asp343, 400-402, Lys407, and Ser429; that span reads VVE. His450 (for 3-hydroxyacyl-CoA dehydrogenase activity) is an active-site residue. NAD(+) is bound at residue Asn453. Substrate is bound by residues Asn500 and Tyr660. Residues 707–729 are disordered; sequence TRHNEPYYPPVEPARPVGSLKTA.

This sequence in the N-terminal section; belongs to the enoyl-CoA hydratase/isomerase family. The protein in the C-terminal section; belongs to the 3-hydroxyacyl-CoA dehydrogenase family. In terms of assembly, heterotetramer of two alpha chains (FadB) and two beta chains (FadA).

The enzyme catalyses a (3S)-3-hydroxyacyl-CoA + NAD(+) = a 3-oxoacyl-CoA + NADH + H(+). The catalysed reaction is a (3S)-3-hydroxyacyl-CoA = a (2E)-enoyl-CoA + H2O. It carries out the reaction a 4-saturated-(3S)-3-hydroxyacyl-CoA = a (3E)-enoyl-CoA + H2O. It catalyses the reaction (3S)-3-hydroxybutanoyl-CoA = (3R)-3-hydroxybutanoyl-CoA. The enzyme catalyses a (3Z)-enoyl-CoA = a 4-saturated (2E)-enoyl-CoA. The catalysed reaction is a (3E)-enoyl-CoA = a 4-saturated (2E)-enoyl-CoA. It participates in lipid metabolism; fatty acid beta-oxidation. Its function is as follows. Involved in the aerobic and anaerobic degradation of long-chain fatty acids via beta-oxidation cycle. Catalyzes the formation of 3-oxoacyl-CoA from enoyl-CoA via L-3-hydroxyacyl-CoA. It can also use D-3-hydroxyacyl-CoA and cis-3-enoyl-CoA as substrate. The protein is Fatty acid oxidation complex subunit alpha of Salmonella typhi.